The following is a 499-amino-acid chain: Putative sodium-dependent excitatory amino acid transporter glt-4 (499 aa).

At 1 to 7 (MAKLSKE) the chain is on the cytoplasmic side. 3 helical membrane-spanning segments follow: residues 8-28 (NLLL…GFSL), 50-70 (FVQM…ITSL), and 87-107 (IYYT…VSVI). A glycan (N-linked (GlcNAc...) asparagine) is linked at asparagine 165. Transmembrane regions (helical) follow at residues 194 to 217 (VSDG…IGVI), 227 to 254 (FFKS…TFLI), and 276 to 297 (ITVI…CVVL). The discontinuously helical intramembrane region spans 303 to 333 (IKFVGGMAQALLTALATSSSSATLPLSIKCC). 320–322 (SSS) contacts L-aspartate. The chain crosses the membrane as a helical span at residues 343 to 369 (VTRFVLPLGATINMDGTALYEAVAAIY). Na(+) is bound by residues glycine 351, threonine 353, and asparagine 355. Residues threonine 359, 400–404 (IPQAG), aspartate 433, and asparagine 440 contribute to the L-aspartate site. Residues 383–416 (VVLVSLTATLASIGAAGIPQAGIVTMIMVLIAIG) constitute an intramembrane region (discontinuously helical). A helical transmembrane segment spans residues 430 to 451 (FMLDRLRTTVNVHGDSIATAVI). Na(+) is bound by residues asparagine 440 and aspartate 444.

This sequence belongs to the dicarboxylate/amino acid:cation symporter (DAACS) (TC 2.A.23) family.

The protein localises to the cell membrane. In terms of biological role, sodium-dependent, high-affinity amino acid transporter that mediates the uptake of L-glutamate and also L-aspartate and D-aspartate. Functions as a symporter that transports one amino acid molecule together with two or three Na(+) ions and one proton, in parallel with the counter-transport of one K(+) ion. Mediates Cl(-) flux that is not coupled to amino acid transport; this avoids the accumulation of negative charges due to aspartate and Na(+) symport. In Caenorhabditis elegans, this protein is Putative sodium-dependent excitatory amino acid transporter glt-4 (glt-4).